A 527-amino-acid chain; its full sequence is Peptide chain release factor 3 (527 aa).

A tr-type G domain is found at 9-277 (AKRRTFAIIS…AVVDWAPRPL (269 aa)). Residues 18 to 25 (SHPDAGKT), 86 to 90 (DTPGH), and 140 to 143 (NKLD) each bind GTP.

The protein belongs to the TRAFAC class translation factor GTPase superfamily. Classic translation factor GTPase family. PrfC subfamily.

It is found in the cytoplasm. Increases the formation of ribosomal termination complexes and stimulates activities of RF-1 and RF-2. It binds guanine nucleotides and has strong preference for UGA stop codons. It may interact directly with the ribosome. The stimulation of RF-1 and RF-2 is significantly reduced by GTP and GDP, but not by GMP. In Pseudomonas fluorescens (strain SBW25), this protein is Peptide chain release factor 3.